The chain runs to 292 residues: Small ribosomal subunit biogenesis GTPase RsgA (292 aa).

In terms of domain architecture, CP-type G spans 65-223 (KTELIRPTVA…VVDTPGFSSL (159 aa)). GTP-binding positions include 114–117 (NKLD) and 165–173 (GPSGVGKST). Zn(2+)-binding residues include Cys247, Cys252, His254, and Cys260.

Belongs to the TRAFAC class YlqF/YawG GTPase family. RsgA subfamily. As to quaternary structure, monomer. Associates with 30S ribosomal subunit, binds 16S rRNA. It depends on Zn(2+) as a cofactor.

Its subcellular location is the cytoplasm. One of several proteins that assist in the late maturation steps of the functional core of the 30S ribosomal subunit. Helps release RbfA from mature subunits. May play a role in the assembly of ribosomal proteins into the subunit. Circularly permuted GTPase that catalyzes slow GTP hydrolysis, GTPase activity is stimulated by the 30S ribosomal subunit. The protein is Small ribosomal subunit biogenesis GTPase RsgA of Alkaliphilus metalliredigens (strain QYMF).